Consider the following 290-residue polypeptide: O-methyltransferase agiB (290 aa).

Residue D155 participates in S-adenosyl-L-methionine binding. The active-site Proton acceptor is the H194.

Belongs to the class I-like SAM-binding methyltransferase superfamily. Cation-independent O-methyltransferase family.

Its pathway is secondary metabolite biosynthesis. In terms of biological role, O-methyltransferase; part of the gene cluster that mediates the biosynthesis of the aspergillicins A and F, 2 cryptic cyclic hexa-depsipeptides. The hexamodular NRPS agiA catalyzes the condensation of the six amino acid residues including N-Me-L-O-Me-tyrosine, L-proline 1, L-proline 2, D-isoleucine, O-acetyl-threonine, and L-isoleucine. The starting condensation domain (C1) of agiA probably loads acetyl-CoA which is condensed on the N-terminus of threonine by the first module to yield O-acetyl-threonine. The second module then loads L-isoleucine. The epimerase (E) domain on module 2 is probably involved in the formation of the D-isoleucine moiety. Modules 3 and 4 further load 2 successive L-prolines. Module 5 is then involved in the condensation of O-Me-L-tyrosine produced by the O-methyltransferase agiB and the N-methyl transferase (NMeT) domain on module 5 probably catalyzes the N-methylation to yield the N-Me-L-O-Me-tyrosine moiety. The A domain of module 5 loads preferentially O-Me-L-tyrosine, but it can also accept L-phenylalanine, which leads to the production of aspergillicin G. Module 6 then loads the last residue, L-isoleucine. The C-terminal thiolesterase (TE) domain probably cyclizes the peptide using the hydroxy group from threonine to form the cyclic depsipeptide. The protein is O-methyltransferase agiB of Aspergillus flavus (strain ATCC 200026 / FGSC A1120 / IAM 13836 / NRRL 3357 / JCM 12722 / SRRC 167).